The sequence spans 535 residues: RAN GTPase-activating protein 1 (535 aa).

The interval M1–D115 is WPP. LRR repeat units lie at residues G208 to S231, Q236 to E259, T264 to E287, C320 to K343, E353 to S376, A377 to A400, K405 to K428, H433 to Q456, and K461 to D488. Residues L493–E535 are disordered. The segment covering D497–E520 has biased composition (acidic residues).

It belongs to the RNA1 family. Homodimer. Interacts with WIP1 through its WPP domain. Component of Ran complexes at least composed of WIT1 or WIT2, RANGAP1 or RANGAP2, and WIP1 or WIP2 or WIP3. Interacts directly with WIT1, WIP2 and WIP3. Interacts with POK1.

It localises to the cytoplasm. The protein localises to the nucleus envelope. The protein resides in the nucleus membrane. It is found in the cytoskeleton. Its subcellular location is the spindle. It localises to the phragmoplast. Functionally, GTPase activator for the nuclear Ras-related regulatory protein Ran, converting it to the putatively inactive GDP-bound state. Plays a role in spatial signaling during cell division. This Arabidopsis thaliana (Mouse-ear cress) protein is RAN GTPase-activating protein 1 (RANGAP1).